Here is a 96-residue protein sequence, read N- to C-terminus: Pyrimidine/purine nucleoside phosphorylase (96 aa).

Belongs to the nucleoside phosphorylase PpnP family.

It carries out the reaction a purine D-ribonucleoside + phosphate = a purine nucleobase + alpha-D-ribose 1-phosphate. The catalysed reaction is adenosine + phosphate = alpha-D-ribose 1-phosphate + adenine. It catalyses the reaction cytidine + phosphate = cytosine + alpha-D-ribose 1-phosphate. The enzyme catalyses guanosine + phosphate = alpha-D-ribose 1-phosphate + guanine. It carries out the reaction inosine + phosphate = alpha-D-ribose 1-phosphate + hypoxanthine. The catalysed reaction is thymidine + phosphate = 2-deoxy-alpha-D-ribose 1-phosphate + thymine. It catalyses the reaction uridine + phosphate = alpha-D-ribose 1-phosphate + uracil. The enzyme catalyses xanthosine + phosphate = alpha-D-ribose 1-phosphate + xanthine. Functionally, catalyzes the phosphorolysis of diverse nucleosides, yielding D-ribose 1-phosphate and the respective free bases. Can use uridine, adenosine, guanosine, cytidine, thymidine, inosine and xanthosine as substrates. Also catalyzes the reverse reactions. The polypeptide is Pyrimidine/purine nucleoside phosphorylase (Serratia proteamaculans (strain 568)).